The primary structure comprises 159 residues: IQ domain-containing protein J (159 aa).

Residues 47-67 (ESKVKIIQRAWREYLQRQEPL) form the IQ domain. The disordered stretch occupies residues 63–88 (RQEPLGKRSPSPPSVSSEKLSSSVSM). Over residues 76-87 (SVSSEKLSSSVS) the composition is skewed to low complexity.

In Homo sapiens (Human), this protein is IQ domain-containing protein J.